We begin with the raw amino-acid sequence, 1025 residues long: Myosin phosphatase Rho-interacting protein (1025 aa).

An interaction with F-actin region spans residues 2–383 (SAAKENPCRK…DRRSTEPSVT (382 aa)). The PH 1 domain maps to 43 to 150 (KPIYGGWLLL…WLEMLMVYPR (108 aa)). Disordered stretches follow at residues 152–302 (NKQN…RRSQ) and 317–383 (HMET…PSVT). The span at 179–189 (SSSSSSSSSSS) shows a compositional bias: low complexity. Residues serine 192, serine 217, serine 218, serine 220, serine 224, and serine 226 each carry the phosphoserine modification. Positions 217 to 236 (SSLSPAQSPSQSQPPAASSL) are enriched in low complexity. A compositionally biased stretch (basic and acidic residues) spans 239–263 (PGLESKEEESAMSSDRMDCGRKVRV). Phosphoserine is present on residues serine 265 and serine 269. The segment covering 271-281 (EKTKQDLKAEE) has biased composition (basic and acidic residues). The span at 284–294 (LPPPLSPPSPS) shows a compositional bias: pro residues. Serine 289 and serine 292 each carry phosphoserine. Threonine 295 carries the phosphothreonine modification. Serine 326 is subject to Phosphoserine. Residues 332–348 (RQGRSEKRAFPRKRDFT) show a composition bias toward basic and acidic residues. At threonine 348 the chain carries Phosphothreonine. Residues serine 362 and serine 365 each carry the phosphoserine modification. One can recognise a PH 2 domain in the interval 387 to 483 (LNFKKGWLTK…WIQTIMKHVH (97 aa)). Disordered regions lie at residues 485–545 (TTAP…TFDW) and 560–591 (VGGV…RREE). Residue serine 493 is modified to Phosphoserine. Basic and acidic residues-rich tracts occupy residues 524-545 (PEQK…TFDW) and 567-589 (DTHE…ARRR). Positions 546-824 (AEFRPIQQAL…SVQRELEVLS (279 aa)) are interaction with RHOA. Serine 619 is modified (phosphoserine). Threonine 646 is subject to Phosphothreonine. Serine 663 and serine 800 each carry phosphoserine. The stretch at 673-977 (HELTSLLEKE…AATEALGEKS (305 aa)) forms a coiled coil. Residues 824–879 (SEQYSQKCLENAHLAQALEAERQALRQCQRENQELNAHNQELNNRLAAEITRLRTL) form an interaction with PPP1R12A region. Residues serine 891, serine 977, serine 993, serine 1014, and serine 1016 each carry the phosphoserine modification.

As to quaternary structure, binds F-actin through its N-terminus. Interacts with MYZAP. Binds RHOA, PPP1R12A/MBS and PPP1R12C/MBS85 through adjacent coiled coil domains.

The protein resides in the cytoplasm. It localises to the cytoskeleton. Functionally, targets myosin phosphatase to the actin cytoskeleton. Required for the regulation of the actin cytoskeleton by RhoA and ROCK1. Depletion leads to an increased number of stress fibers in smooth muscle cells through stabilization of actin fibers by phosphorylated myosin. Overexpression of MRIP as well as its F-actin-binding region leads to disassembly of stress fibers in neuronal cells. The polypeptide is Myosin phosphatase Rho-interacting protein (MPRIP) (Homo sapiens (Human)).